The chain runs to 94 residues: Selenoprotein K (94 aa).

Residues Leu-20–Leu-42 form a helical membrane-spanning segment. The disordered stretch occupies residues Lys-48 to Arg-94. Sec-92 is a non-standard amino acid (selenocysteine).

This sequence belongs to the selenoprotein K family. As to quaternary structure, interacts with DERL1, DERL2, DERL3 and SELENOS. The SELENOK-SELENOS complex interacts with VCP. Interacts with ZDHHC6. Post-translationally, cleaved by CAPN2/m-calpain in resting macrophages but not in activated macrophages. Macrophage activation up-regulates expression of the calpain inhibitor CAST/calpastatin, resulting in inhibition of CAPN2 activity. In terms of processing, truncated SELENOK proteins produced by failed UGA/Sec decoding are ubiquitinated by the CRL2(KLHDC2) complex, which recognizes the diglycine (Gly-Gly) at the C-terminus of truncated SELENOK proteins.

It localises to the endoplasmic reticulum membrane. It is found in the cell membrane. Required for Ca(2+) flux in immune cells and plays a role in T-cell proliferation and in T-cell and neutrophil migration. Involved in endoplasmic reticulum-associated degradation (ERAD) of soluble glycosylated proteins. Required for palmitoylation and cell surface expression of CD36 and involved in macrophage uptake of low-density lipoprotein and in foam cell formation. Together with ZDHHC6, required for palmitoylation of ITPR1 in immune cells, leading to regulate ITPR1 stability and function. Plays a role in protection of cells from ER stress-induced apoptosis. Protects cells from oxidative stress when overexpressed in cardiomyocytes. This Rattus norvegicus (Rat) protein is Selenoprotein K.